The chain runs to 346 residues: N-acetyl-gamma-glutamyl-phosphate reductase (346 aa).

Cysteine 149 is an active-site residue.

Belongs to the NAGSA dehydrogenase family. Type 1 subfamily.

It is found in the cytoplasm. It carries out the reaction N-acetyl-L-glutamate 5-semialdehyde + phosphate + NADP(+) = N-acetyl-L-glutamyl 5-phosphate + NADPH + H(+). The protein operates within amino-acid biosynthesis; L-arginine biosynthesis; N(2)-acetyl-L-ornithine from L-glutamate: step 3/4. In terms of biological role, catalyzes the NADPH-dependent reduction of N-acetyl-5-glutamyl phosphate to yield N-acetyl-L-glutamate 5-semialdehyde. In Geobacter metallireducens (strain ATCC 53774 / DSM 7210 / GS-15), this protein is N-acetyl-gamma-glutamyl-phosphate reductase.